Reading from the N-terminus, the 63-residue chain is Large ribosomal subunit protein uL29 (63 aa).

This sequence belongs to the universal ribosomal protein uL29 family.

This Sodalis glossinidius (strain morsitans) protein is Large ribosomal subunit protein uL29.